The following is a 222-amino-acid chain: Ras-related protein Rab-41 (222 aa).

Positions 41, 42, 43, 44, 45, 46, and 63 each coordinate GTP. Thr45 lines the Mg(2+) pocket. The interval 58 to 66 is switch-I; it reads CACQATVGI. Residues Thr63 and Asp86 each coordinate Mg(2+). Positions 89, 144, 145, 147, 174, 175, and 176 each coordinate GTP. The switch-II stretch occupies residues 89 to 105; sequence GQERFHSLIPSYIRDST. The S-geranylgeranyl cysteine moiety is linked to residue Cys222.

It belongs to the small GTPase superfamily. Rab family. It depends on Mg(2+) as a cofactor. As to expression, widely expressed in brain, testis, lung, heart, ovary, colon, kidney, uterus and spleen but not in liver.

Its subcellular location is the cytoplasm. It catalyses the reaction GTP + H2O = GDP + phosphate + H(+). Regulated by guanine nucleotide exchange factors (GEFs) which promote the exchange of bound GDP for free GTP. Regulated by GTPase activating proteins (GAPs) which increase the GTP hydrolysis activity. Inhibited by GDP dissociation inhibitors (GDIs). Its function is as follows. The small GTPases Rab are key regulators of intracellular membrane trafficking, from the formation of transport vesicles to their fusion with membranes. Rabs cycle between an inactive GDP-bound form and an active GTP-bound form that is able to recruit to membranes different sets of downstream effectors directly responsible for vesicle formation, movement, tethering and fusion. RAB41 is required for normal Golgi ribbon organization and ER-to-Golgi trafficking. The polypeptide is Ras-related protein Rab-41 (Homo sapiens (Human)).